The sequence spans 362 residues: Ferrochelatase (362 aa).

Residues His228 and Glu309 each coordinate Fe cation.

Belongs to the ferrochelatase family.

It is found in the cytoplasm. The catalysed reaction is heme b + 2 H(+) = protoporphyrin IX + Fe(2+). Its pathway is porphyrin-containing compound metabolism; protoheme biosynthesis; protoheme from protoporphyrin-IX: step 1/1. Functionally, catalyzes the ferrous insertion into protoporphyrin IX. The sequence is that of Ferrochelatase from Bordetella bronchiseptica (strain ATCC BAA-588 / NCTC 13252 / RB50) (Alcaligenes bronchisepticus).